Reading from the N-terminus, the 197-residue chain is Nascent polypeptide-associated complex subunit alpha (197 aa).

Over residues 1–20 the composition is skewed to acidic residues; that stretch reads MAEPVEDSVDEISSEGDSDV. Disordered regions lie at residues 1 to 46 and 120 to 154; these read MAEP…RKLL and GADR…SKAD. The region spanning 36-101 is the NAC-A/B domain; it reads DKNERKSRKL…AKVEDMSQNS (66 aa). Residues 134–154 show a composition bias toward basic and acidic residues; it reads SGHDHAHDHDHSHGDCASKAD. A UBA domain is found at 158–195; the sequence is VNQSDIDLVVSQVGCTREQAVEALIKNKGDIVETIMQL.

This sequence belongs to the NAC-alpha family.

Its function is as follows. May promote appropriate targeting of ribosome-nascent polypeptide complexes. This Babesia divergens protein is Nascent polypeptide-associated complex subunit alpha.